The sequence spans 261 residues: Cytochrome c oxidase subunit 3 (261 aa).

The Mitochondrial matrix portion of the chain corresponds to 1-15 (MTHQTHAYHMVNPSP). A helical membrane pass occupies residues 16-34 (WPLTGALSALLMTSGLVMW). The Mitochondrial intermembrane segment spans residues 35-40 (FHYHST). The helical transmembrane segment at 41 to 66 (ILVLLGLLTNILTMYQWWRDVVREGT) threads the bilayer. Residues 67–72 (FQGHHT) lie on the Mitochondrial matrix side of the membrane. The chain crosses the membrane as a helical span at residues 73 to 105 (PTVQKGLRYGMVLFIISEVFFFAGFFWAFYHSS). The Mitochondrial intermembrane segment spans residues 106–128 (LAPTPELGGCWPPTGIHPLDPME). Residues 129–152 (VPLLNTSVLLASGVTITWAHHSLM) form a helical membrane-spanning segment. Topologically, residues 153 to 155 (EGN) are mitochondrial matrix. A helical transmembrane segment spans residues 156–183 (RKQMLQALFITISLGIYFTLLQASEYHE). The Mitochondrial intermembrane segment spans residues 184-190 (ASFSISD). Residues 191 to 223 (GIYGSTFFMATGFHGLHVIIGSTFLAVCFLRQL) form a helical membrane-spanning segment. At 224 to 232 (KFHFTSNHH) the chain is on the mitochondrial matrix side. A helical membrane pass occupies residues 233 to 256 (FGFEAAAWYWHFVDVVWLFLYVSI). Residues 257–261 (YWWGS) are Mitochondrial intermembrane-facing.

This sequence belongs to the cytochrome c oxidase subunit 3 family. Component of the cytochrome c oxidase (complex IV, CIV), a multisubunit enzyme composed of 14 subunits. The complex is composed of a catalytic core of 3 subunits MT-CO1, MT-CO2 and MT-CO3, encoded in the mitochondrial DNA, and 11 supernumerary subunits COX4I, COX5A, COX5B, COX6A, COX6B, COX6C, COX7A, COX7B, COX7C, COX8 and NDUFA4, which are encoded in the nuclear genome. The complex exists as a monomer or a dimer and forms supercomplexes (SCs) in the inner mitochondrial membrane with NADH-ubiquinone oxidoreductase (complex I, CI) and ubiquinol-cytochrome c oxidoreductase (cytochrome b-c1 complex, complex III, CIII), resulting in different assemblies (supercomplex SCI(1)III(2)IV(1) and megacomplex MCI(2)III(2)IV(2)).

It is found in the mitochondrion inner membrane. It catalyses the reaction 4 Fe(II)-[cytochrome c] + O2 + 8 H(+)(in) = 4 Fe(III)-[cytochrome c] + 2 H2O + 4 H(+)(out). Component of the cytochrome c oxidase, the last enzyme in the mitochondrial electron transport chain which drives oxidative phosphorylation. The respiratory chain contains 3 multisubunit complexes succinate dehydrogenase (complex II, CII), ubiquinol-cytochrome c oxidoreductase (cytochrome b-c1 complex, complex III, CIII) and cytochrome c oxidase (complex IV, CIV), that cooperate to transfer electrons derived from NADH and succinate to molecular oxygen, creating an electrochemical gradient over the inner membrane that drives transmembrane transport and the ATP synthase. Cytochrome c oxidase is the component of the respiratory chain that catalyzes the reduction of oxygen to water. Electrons originating from reduced cytochrome c in the intermembrane space (IMS) are transferred via the dinuclear copper A center (CU(A)) of subunit 2 and heme A of subunit 1 to the active site in subunit 1, a binuclear center (BNC) formed by heme A3 and copper B (CU(B)). The BNC reduces molecular oxygen to 2 water molecules using 4 electrons from cytochrome c in the IMS and 4 protons from the mitochondrial matrix. This Dugong dugon (Dugong) protein is Cytochrome c oxidase subunit 3 (MT-CO3).